Here is a 183-residue protein sequence, read N- to C-terminus: GTP cyclohydrolase 1 (183 aa).

3 residues coordinate Zn(2+): Cys-71, His-74, and Cys-142.

This sequence belongs to the GTP cyclohydrolase I family. As to quaternary structure, toroid-shaped homodecamer, composed of two pentamers of five dimers.

It carries out the reaction GTP + H2O = 7,8-dihydroneopterin 3'-triphosphate + formate + H(+). Its pathway is cofactor biosynthesis; 7,8-dihydroneopterin triphosphate biosynthesis; 7,8-dihydroneopterin triphosphate from GTP: step 1/1. The polypeptide is GTP cyclohydrolase 1 (Leptospira borgpetersenii serovar Hardjo-bovis (strain JB197)).